A 501-amino-acid polypeptide reads, in one-letter code: Glycerol kinase (501 aa).

Residue Thr17 coordinates ADP. 3 residues coordinate ATP: Thr17, Thr18, and Ser19. Sn-glycerol 3-phosphate is bound at residue Thr17. Arg21 contacts ADP. Sn-glycerol 3-phosphate contacts are provided by Arg87, Glu88, Tyr139, and Asp243. 5 residues coordinate glycerol: Arg87, Glu88, Tyr139, Asp243, and Gln244. Positions 265 and 308 each coordinate ADP. ATP is bound by residues Thr265, Gly308, Gln312, and Gly409. ADP contacts are provided by Gly409 and Asn413.

Belongs to the FGGY kinase family.

The enzyme catalyses glycerol + ATP = sn-glycerol 3-phosphate + ADP + H(+). Its pathway is polyol metabolism; glycerol degradation via glycerol kinase pathway; sn-glycerol 3-phosphate from glycerol: step 1/1. Inhibited by fructose 1,6-bisphosphate (FBP). In terms of biological role, key enzyme in the regulation of glycerol uptake and metabolism. Catalyzes the phosphorylation of glycerol to yield sn-glycerol 3-phosphate. In Pseudomonas fluorescens (strain SBW25), this protein is Glycerol kinase.